The following is a 334-amino-acid chain: 3-dehydroquinate synthase (334 aa).

Belongs to the archaeal-type DHQ synthase family.

It catalyses the reaction 2-amino-2,3,7-trideoxy-D-lyxo-hept-6-ulosonate + NAD(+) + H2O = 3-dehydroquinate + NH4(+) + NADH + H(+). Functionally, catalyzes the oxidative deamination and cyclization of 2-amino-3,7-dideoxy-D-threo-hept-6-ulosonic acid (ADH) to yield 3-dehydroquinate (DHQ), which is fed into the canonical shikimic pathway of aromatic amino acid biosynthesis. The polypeptide is 3-dehydroquinate synthase (Korarchaeum cryptofilum (strain OPF8)).